Reading from the N-terminus, the 526-residue chain is Exodeoxyribonuclease 7 large subunit (526 aa).

Residues 499-526 (AGEDGTPSQAPKKRPARAGEPTKQGSLF) form a disordered region.

It belongs to the XseA family. Heterooligomer composed of large and small subunits.

Its subcellular location is the cytoplasm. The catalysed reaction is Exonucleolytic cleavage in either 5'- to 3'- or 3'- to 5'-direction to yield nucleoside 5'-phosphates.. Functionally, bidirectionally degrades single-stranded DNA into large acid-insoluble oligonucleotides, which are then degraded further into small acid-soluble oligonucleotides. This Sinorhizobium medicae (strain WSM419) (Ensifer medicae) protein is Exodeoxyribonuclease 7 large subunit.